The following is a 131-amino-acid chain: Insulin-like 3 (131 aa).

The signal sequence occupies residues 1-20 (MDPRLPAWALVLLGPALVFA). Cystine bridges form between cysteine 34–cysteine 116, cysteine 46–cysteine 129, and cysteine 115–cysteine 120. Residues 58–104 (PATGGDRELLQWLERRHLLHGLVADSNLTLGPGLQPLPQTSHHHRHH) constitute a propeptide, c peptide like.

Belongs to the insulin family. In terms of assembly, heterodimer of a B chain and an A chain linked by two disulfide bonds. In terms of tissue distribution, expressed in prenatal and postnatal Leydig cells. Found as well in the corpus luteum, trophoblast, fetal membranes and breast.

Its subcellular location is the secreted. Seems to play a role in testicular function. May be a trophic hormone with a role in testicular descent in fetal life. Is a ligand for LGR8 receptor. In Homo sapiens (Human), this protein is Insulin-like 3 (INSL3).